The sequence spans 476 residues: S-adenosylmethionine-dependent nucleotide dehydratase (476 aa).

The interval 1 to 168 (MKTKITLSGF…LTANEVADLI (168 aa)) is cytidylate kinase-like domain. ATP is bound at residue 9–17 (GFAGTGKST). A Radical SAM core domain is found at 176-400 (NAVSKIPSVN…HKDVETIVPE (225 aa)). Residues 183-476 (SVNFHLWQPC…DLRKEEVSYE (294 aa)) are prokaryotic viperin domain. [4Fe-4S] cluster is bound by residues C192, C196, and C199.

It in the N-terminal section; belongs to the cytidylate kinase-like family. This sequence in the C-terminal section; belongs to the radical SAM superfamily. Viperin family. [4Fe-4S] cluster serves as cofactor.

It carries out the reaction GTP + AH2 + S-adenosyl-L-methionine = 3'-deoxy-3',4'-didehydro-GTP + 5'-deoxyadenosine + L-methionine + A + H2O + H(+). Its function is as follows. Expression of pVip60 in E.coli (strain MG1655) confers resistance to phage T7; prevents culture collapse upon infection. Catalyzes the conversion of guanosine triphosphate (GTP) to 3'-deoxy-3',4'-didehydro-GTP (ddhGTP), probably via a SAM-dependent radical mechanism. The modified nucleotide represses transcription from T7 RNA polymerase-directed genes (possibly by acting as chain terminators), strongly suggesting these nucleotides block viral polymerase transcription. Functionally, the N-terminus of the protein may generate NTP for use by the viperin domain. This chain is S-adenosylmethionine-dependent nucleotide dehydratase, found in Lacinutrix mariniflava (strain JCM 13824 / KCCM 42306 / AKS432).